A 444-amino-acid polypeptide reads, in one-letter code: MARTRNRFDRTPFQTAITDLSHDGRGVARRDGEGGKVTFISGALPGELVRAEPTARSRHFDEAKTVEVLEASPQRVAPRCPHFGVCAGCVLQHLEESQQIVAKQRVLMDNLERIGHVTPQAVLPGLTGDNWGYRRKGRFSVRRVEKKAKTLVGFRELDPRFVADLSVCYTVIPQIGEKIPLLAALVEGMDGKRDIPQIEFIAGDDAVALTIRHMQPLSARDQQAWIAFAQEHGFAIFLQPGGVDSVHPLWPQEVPLSFRLPQWDVDLAFRPLDFIQVNASLNQKMIVHALALLDAKPDDRVLDLFCGLGNFTLPLARVVREVVGVEGDAGLVARAKDNAQRNGLDNAQFYAADLTQDQRNAAWMRQGFDKLLLDPPRSGALEVLQQLPLKTFERIVYVSCHPGSLARDAGYLVNEQGFTLVSAGAMDMFPHTAHVESIAVFERR.

One can recognise a TRAM domain in the interval 5–67 (RNRFDRTPFQ…RHFDEAKTVE (63 aa)). Cysteine 80, cysteine 86, cysteine 89, and cysteine 168 together coordinate [4Fe-4S] cluster. Positions 276, 305, 310, 326, 353, and 374 each coordinate S-adenosyl-L-methionine. Cysteine 400 acts as the Nucleophile in catalysis.

It belongs to the class I-like SAM-binding methyltransferase superfamily. RNA M5U methyltransferase family. RlmD subfamily.

The enzyme catalyses uridine(1939) in 23S rRNA + S-adenosyl-L-methionine = 5-methyluridine(1939) in 23S rRNA + S-adenosyl-L-homocysteine + H(+). Its function is as follows. Catalyzes the formation of 5-methyl-uridine at position 1939 (m5U1939) in 23S rRNA. The sequence is that of 23S rRNA (uracil(1939)-C(5))-methyltransferase RlmD from Xanthomonas oryzae pv. oryzae (strain MAFF 311018).